The chain runs to 863 residues: Bifunctional uridylyltransferase/uridylyl-removing enzyme (863 aa).

A uridylyltransferase region spans residues 1-328 (MLFPLSLSSP…SSNQATVIEQ (328 aa)). The uridylyl-removing stretch occupies residues 329–687 (LDDDFQLINQ…ISNRFSLGGT (359 aa)). Residues 446–568 (VDEHTLRVML…VQNQVRLDYL (123 aa)) form the HD domain. ACT domains are found at residues 688 to 772 (EVFI…PNRQ) and 794 to 863 (EMEL…RNIG).

It belongs to the GlnD family. Requires Mg(2+) as cofactor.

It catalyses the reaction [protein-PII]-L-tyrosine + UTP = [protein-PII]-uridylyl-L-tyrosine + diphosphate. It carries out the reaction [protein-PII]-uridylyl-L-tyrosine + H2O = [protein-PII]-L-tyrosine + UMP + H(+). Uridylyltransferase (UTase) activity is inhibited by glutamine, while glutamine activates uridylyl-removing (UR) activity. Its function is as follows. Modifies, by uridylylation and deuridylylation, the PII regulatory proteins (GlnB and homologs), in response to the nitrogen status of the cell that GlnD senses through the glutamine level. Under low glutamine levels, catalyzes the conversion of the PII proteins and UTP to PII-UMP and PPi, while under higher glutamine levels, GlnD hydrolyzes PII-UMP to PII and UMP (deuridylylation). Thus, controls uridylylation state and activity of the PII proteins, and plays an important role in the regulation of nitrogen assimilation and metabolism. The protein is Bifunctional uridylyltransferase/uridylyl-removing enzyme of Haemophilus influenzae (strain PittEE).